A 336-amino-acid chain; its full sequence is Cytoplasmic envelopment protein 2 (336 aa).

This sequence belongs to the herpesviridae cytoplasmic envelopment protein 2 family. Interacts with cytoplasmic envelopment protein 3 and with the capsid.

The protein localises to the virion tegument. The protein resides in the host cytoplasm. Its subcellular location is the host nucleus. Its function is as follows. Plays a critical role in cytoplasmic virus egress. Participates in the final step of tegumentation and envelope acquisition within the host cytoplasm by directly interacting with the capsid. Upon virion binding to target cell, a signaling cascade is triggered to disrupt the interaction with the capsid, thereby preparing capsid uncoating. This Elephantid herpesvirus 1 (isolate Asian elephant/Berlin/Kiba/1998) (EIHV-1) protein is Cytoplasmic envelopment protein 2.